The primary structure comprises 454 residues: DNA repair protein RadA (454 aa).

A C4-type zinc finger spans residues 11 to 28 (CTECGTHSPKWLGQCSGC). 94–101 (GEPGIGKS) contacts ATP. The RadA KNRFG motif motif lies at 251–255 (KNRFG). The tract at residues 350-454 (DVFLSIAGGL…TIKDAVRLLQ (105 aa)) is lon-protease-like.

The protein belongs to the RecA family. RadA subfamily.

DNA-dependent ATPase involved in processing of recombination intermediates, plays a role in repairing DNA breaks. Stimulates the branch migration of RecA-mediated strand transfer reactions, allowing the 3' invading strand to extend heteroduplex DNA faster. Binds ssDNA in the presence of ADP but not other nucleotides, has ATPase activity that is stimulated by ssDNA and various branched DNA structures, but inhibited by SSB. Does not have RecA's homology-searching function. The chain is DNA repair protein RadA from Chlamydia trachomatis serovar D (strain ATCC VR-885 / DSM 19411 / UW-3/Cx).